The chain runs to 356 residues: Glutamine synthetase PR-1 (356 aa).

Residues 19–99 (VIAEYIWIGG…VICDAYTPAG (81 aa)) form the GS beta-grasp domain. The tract at residues 41-64 (PGPVKNPSELPKWNYDGSSTGQAP) is disordered. Positions 106–356 (KRHNAAKIFS…IADTTILWKP (251 aa)) constitute a GS catalytic domain.

Belongs to the glutamine synthetase family. As to quaternary structure, homooctamer. Roots.

It localises to the cytoplasm. The catalysed reaction is L-glutamate + NH4(+) + ATP = L-glutamine + ADP + phosphate + H(+). This is Glutamine synthetase PR-1 from Phaseolus vulgaris (Kidney bean).